Here is a 295-residue protein sequence, read N- to C-terminus: MKKTAIITDSTASIKPGEINGVYILPLQVIVDGEKSFRDGIEIDYDHVHKLLKENPHGLNISTSLPRQSDLLKIFEEIKTKYDRFIFLPLSKGLSGTYDMLVQLAKELSEQNKDKEFLVFETSDIAISLKWLVEDIKALVDKGCDNQTIKAKVESHKQNILSAVTLKNLVQMRKGGRISGLKKFITTLLRVKPIILFDKGVNTLGAKVFSFSQAVEKIFGFVKTKFGDNYKIKRIGFCYSFCKNYANEIKKIITDFIEHNKINFQNEIENAFITSVIIVHTGIDAFSISLLIDNK.

Residues 4-292 enclose the DegV domain; it reads TAIITDSTAS…IDAFSISLLI (289 aa). 2 residues coordinate hexadecanoate: Thr-63 and Ser-95.

Its function is as follows. May bind long-chain fatty acids, such as palmitate, and may play a role in lipid transport or fatty acid metabolism. In Mycoplasma genitalium (strain ATCC 33530 / DSM 19775 / NCTC 10195 / G37) (Mycoplasmoides genitalium), this protein is DegV domain-containing protein MG326.